Consider the following 295-residue polypeptide: Ribosomal RNA small subunit methyltransferase A (295 aa).

Positions 29, 31, 56, 77, 102, and 128 each coordinate S-adenosyl-L-methionine.

It belongs to the class I-like SAM-binding methyltransferase superfamily. rRNA adenine N(6)-methyltransferase family. RsmA subfamily.

Its subcellular location is the cytoplasm. It catalyses the reaction adenosine(1518)/adenosine(1519) in 16S rRNA + 4 S-adenosyl-L-methionine = N(6)-dimethyladenosine(1518)/N(6)-dimethyladenosine(1519) in 16S rRNA + 4 S-adenosyl-L-homocysteine + 4 H(+). Functionally, specifically dimethylates two adjacent adenosines (A1518 and A1519) in the loop of a conserved hairpin near the 3'-end of 16S rRNA in the 30S particle. May play a critical role in biogenesis of 30S subunits. The chain is Ribosomal RNA small subunit methyltransferase A from Listeria monocytogenes serotype 4b (strain CLIP80459).